The sequence spans 76 residues: Contulakin-G (76 aa).

Residues 1 to 22 (MQTAYWVMVMMMVWIAAPLSEG) form the signal peptide. Residues 23-50 (GKLNDVIRGLVPDDITPQLILGSLISRR) constitute a propeptide that is removed on maturation. Glutamine 51 is modified (pyrrolidone carboxylic acid). The interval 51 to 76 (QSEEGGSNATKKPYILRASDQVASGP) is disordered. O-linked (GalNAc...) threonine glycosylation is present at threonine 60. Positions 67–76 (RASDQVASGP) are excised as a propeptide.

This sequence belongs to the conotoxin C superfamily. O-glycosylated. The glycosylation seems to enhance the affinity to the neurotensin receptors. Expressed by the venom duct.

The protein resides in the secreted. Acts as an agonist of neurotensin receptors. It binds to human neurotensin type 1 receptor (NTSR1), rat neurotensin types 1 and 2 receptors (NTSR1/NTSR2) and mouse neurotensin type 3 receptor (SORT1). This is Contulakin-G from Conus geographus (Geography cone).